The chain runs to 131 residues: Profilin-2 (131 aa).

It belongs to the profilin family. In terms of assembly, occurs in many kinds of cells as a complex with monomeric actin in a 1:1 ratio.

The protein localises to the cytoplasm. It is found in the cytoskeleton. Functionally, binds to actin and affects the structure of the cytoskeleton. At high concentrations, profilin prevents the polymerization of actin, whereas it enhances it at low concentrations. By binding to PIP2, it inhibits the formation of IP3 and DG. In Lilium longiflorum (Trumpet lily), this protein is Profilin-2.